The chain runs to 377 residues: Serine protease grass (377 aa).

A signal peptide spans 1-26; that stretch reads MMIASSLAVLYGIAIVSSMGVQSARA. Positions 31-89 constitute a Clip domain; the sequence is DCTTPDGDQGQCMPFSSCRTIEERLTEAQKAGQKVPADYASYLQKALCGEFNGVRHFCC. Disulfide bonds link Cys32-Cys88, Cys42-Cys78, Cys48-Cys89, Cys111-Cys243, Cys148-Cys164, and Cys188-Cys197. A linker region spans residues 91–118; sequence SANIQHNSKVMSLFKDENFDCGNFLSQR. The Peptidase S1 domain occupies 119 to 373; that stretch reads VSNGYEVKLS…YVQWITDTMA (255 aa). Catalysis depends on His163, which acts as the Charge relay system. Glu179, Arg181, Thr184, and Asp187 together coordinate Ca(2+). Residue Asp223 is the Charge relay system of the active site. 2 N-linked (GlcNAc...) asparagine glycosylation sites follow: Asn230 and Asn270. 2 disulfide bridges follow: Cys290–Cys304 and Cys314–Cys349. The active-site Charge relay system is the Ser318.

Belongs to the peptidase S1 family. CLIP subfamily. In terms of processing, proteolytically cleaved by a tryspin-like protease which is likely to activate grass.

The protein localises to the secreted. Endopeptidase. Plays a key role in innate immunity by activating the Toll pathway in response to fungal and Gram-positive bacterial infections, presumably downstream of pattern-recognition receptors (PRR), such as PGRP-SA, GNBP1 and GNBP3, and upstream of spz processing enzyme SPE. The polypeptide is Serine protease grass (Drosophila melanogaster (Fruit fly)).